The primary structure comprises 223 residues: Cytidylate kinase (223 aa).

13-21 (GPSASGKGT) contacts ATP.

Belongs to the cytidylate kinase family. Type 1 subfamily.

The protein localises to the cytoplasm. It catalyses the reaction CMP + ATP = CDP + ADP. The catalysed reaction is dCMP + ATP = dCDP + ADP. The sequence is that of Cytidylate kinase from Nitrosomonas europaea (strain ATCC 19718 / CIP 103999 / KCTC 2705 / NBRC 14298).